A 495-amino-acid polypeptide reads, in one-letter code: Putative FAD-containing monooxygenase MymA (495 aa).

FAD contacts are provided by residues S15, E36, W45, 56–57 (DS), and V104.

This sequence belongs to the FAD-binding monooxygenase family. FAD is required as a cofactor.

Required for maintaining the appropriate mycolic acid composition and permeability of the envelope on its exposure to acidic pH. This chain is Putative FAD-containing monooxygenase MymA (mymA), found in Mycobacterium tuberculosis (strain CDC 1551 / Oshkosh).